The following is a 375-amino-acid chain: MIDLFDFVVLSSFIILLPLVTDFLNNTFPNAKIGRLAQEVVGMILVFFIVSLIFAGVSLWYTHFLPFYYTKSLLISFDTLNLLDLLKFINTDNNNNSGSSIFNKITFYFHIFFTIQLVVNLYYYYYQTITADNFLPKISKNKQIQLFASETTTTTTTTTDNINEKKNKLCGLCDQVSDGKWSTINKPKSHHCRICKRCIDSMDHHCPFAANCIGINNHHYFILFIGYTVMALIYACYLSFFPYYHCIVNYKNYVSLSFTNDNDNDNNNNNNFKQLAQSCAKFNKYSFIFLCCCLIVTASFGILLFQTYLIITNSKTVQLLSRLKKSKSFLDWFKWLYQNFKQNASINNIYSLFPNFKFYNLIIPYYKRKINKLNK.

The next 2 membrane-spanning stretches (helical) occupy residues 4–24 (LFDFVVLSSFIILLPLVTDFL) and 40–60 (VVGMILVFFIVSLIFAGVSLW). Asn-95 carries N-linked (GlcNAc...) asparagine glycosylation. The next 3 membrane-spanning stretches (helical) occupy residues 105–125 (ITFYFHIFFTIQLVVNLYYYY), 221–241 (FILFIGYTVMALIYACYLSFF), and 285–305 (YSFIFLCCCLIVTASFGILLF). The 51-residue stretch at 176-226 (VSDGKWSTINKPKSHHCRICKRCIDSMDHHCPFAANCIGINNHHYFILFIG) folds into the DHHC domain. A glycan (N-linked (GlcNAc...) asparagine) is linked at Asn-343.

Belongs to the DHHC palmitoyltransferase family.

It localises to the membrane. It carries out the reaction L-cysteinyl-[protein] + hexadecanoyl-CoA = S-hexadecanoyl-L-cysteinyl-[protein] + CoA. The chain is Putative ZDHHC-type palmitoyltransferase 8 from Dictyostelium discoideum (Social amoeba).